The sequence spans 685 residues: MAEGGGSVQRLRRQLESNSFQAEQYVKLLSQQSDGDRDLQEHRQRIQSLADETAQSLKRNVYQNYRQFIETAKEISYLEGEMYQLSHILTEQKSIMESVTQALLYTDRSEAARELQTAFPKEAEEGKVRNLTTLLEKVEGCKNLLETPGRYLVYNGDLTEFDVDNMALIQKVHAFLMNDCLLIATSVPNRRGIYKYNALHNLDDLAVVNVKENPPMKDMFKILMFPESRIFQAENAKIKKEWLEILEQTKKNKALNEKQKQEETTPQLPVVPEIPANPFIDEDGTFDEVEVDLTIDWIQELPEDLDVCIAQRNFEGAVDLLDKLNSYLEDKPLTHPVKELKSKVDERVRQLTDVLVFELSPDRSLRGGPKATRRAVSQLVRLGQSTKACELFLKNQAAAVQTAIRQLRIEGATLLYIHKLCNVFFTSLLETAKEFEMDFAENHGCYSAFIVWSRLALKMFVDAFSKQVFDSKESLSTVAECVKVAKEHCKQLSEIGLDLTFILHTLLVKDIKAALQSYKDIVIEATKHRNSEEMWRRMNLMTPEVLGKLREEMRNCGINNFDQYTGDDCWVNISYTIVAFTKQTMAFLEEALKLYFPELHMVLLECLMEIILVAIQHVDYSLRCEQESEKKAFIRQNASFLYENVLVVVEKRFEEGVGKPAKQLQELRNSSRLVRVNPESTTSVV.

A PH domain is found at 151–251 (YLVYNGDLTE…WLEILEQTKK (101 aa)). Residues 254-263 (ALNEKQKQEE) show a composition bias toward basic and acidic residues. The tract at residues 254–273 (ALNEKQKQEETTPQLPVVPE) is disordered.

It belongs to the EXO84 family. The exocyst complex is composed of exoc1, exoc2, exoc3, exoc4, exoc5, exoc6, exoc7 and exoc8.

It localises to the cytoplasm. The protein resides in the perinuclear region. The protein localises to the cell projection. Its subcellular location is the growth cone. In terms of biological role, component of the exocyst complex involved in the docking of exocytic vesicles with fusion sites on the plasma membrane. The polypeptide is Exocyst complex component 8 (exoc8) (Xenopus laevis (African clawed frog)).